The primary structure comprises 391 residues: 8-amino-7-oxononanoate synthase 1 (391 aa).

108-109 (GF) is a binding site for pyridoxal 5'-phosphate. His133 is a binding site for substrate. Pyridoxal 5'-phosphate contacts are provided by residues Ser180, 205–208 (DDAH), and 236–239 (TLSK). Lys239 bears the N6-(pyridoxal phosphate)lysine mark. Substrate is bound at residue Thr353.

It belongs to the class-II pyridoxal-phosphate-dependent aminotransferase family. BioF subfamily. In terms of assembly, homodimer. Pyridoxal 5'-phosphate serves as cofactor.

The catalysed reaction is 6-carboxyhexanoyl-[ACP] + L-alanine + H(+) = (8S)-8-amino-7-oxononanoate + holo-[ACP] + CO2. It functions in the pathway cofactor biosynthesis; biotin biosynthesis. In terms of biological role, catalyzes the decarboxylative condensation of pimeloyl-[acyl-carrier protein] and L-alanine to produce 8-amino-7-oxononanoate (AON), [acyl-carrier protein], and carbon dioxide. The chain is 8-amino-7-oxononanoate synthase 1 from Bacillus velezensis (strain DSM 23117 / BGSC 10A6 / LMG 26770 / FZB42) (Bacillus amyloliquefaciens subsp. plantarum).